Consider the following 383-residue polypeptide: uncharacterized protein (383 aa).

The helical transmembrane segment at 6-26 (LFLFSCLYFIGGNLKALVLGI) threads the bilayer. One can recognise an ATP-grasp domain in the interval 131–303 (YKKLKNLGFN…LAMVLLNNKY (173 aa)).

It is found in the membrane. This is an uncharacterized protein from Methanocaldococcus jannaschii (strain ATCC 43067 / DSM 2661 / JAL-1 / JCM 10045 / NBRC 100440) (Methanococcus jannaschii).